The primary structure comprises 463 residues: Quinolone resistance protein NorB (463 aa).

14 helical membrane-spanning segments follow: residues isoleucine 17 to valine 37, isoleucine 53 to alanine 73, isoleucine 86 to isoleucine 106, isoleucine 107 to isoleucine 127, tyrosine 142 to alanine 162, leucine 165 to isoleucine 185, phenylalanine 201 to threonine 221, serine 230 to leucine 250, threonine 273 to valine 293, tyrosine 299 to isoleucine 319, proline 334 to leucine 354, isoleucine 357 to tyrosine 377, methionine 403 to valine 423, and isoleucine 435 to valine 455.

Belongs to the major facilitator superfamily. TCR/Tet family.

It localises to the cell membrane. Multidrug efflux pump that acts independently of NorA and is one of the factors that confers resistance against diverse quinolones and chemical compounds. The chain is Quinolone resistance protein NorB (norB) from Staphylococcus aureus (strain MRSA252).